The following is a 392-amino-acid chain: MTLVAITYTRGSLHILNQLLLPHQTTYDPLHSARDAWHAIHEMRVRGAPAIAIVAALSLAVELHTLATNNQLSAEPKDVELLILEKLEFLVSSRPTAVNLAEAAGRLGRIVNGRAQVQGVGGNEVAEAYIEAAERMLEDDVRDNRAIGESGAKWVLEHAITTKGSMSGTGQAKVAVLTHCNTGSLATAGYGTALGVIRSLHATGSLERAYCTETRPYNQGSRLTAFELVHDNIPATLITDNMAAALLARQSAGPAQSVGVSAIIVGADRVAANGDTANKIGTYGLAVLAKYHGVKFLVAAPRTTIDMNTKTGADIVIEERPEKEVTKIRGPRVGEEGNGLGAMETITVAADGIGVWNPAFDVTPAALVDGIITEVGVVEKDGSGVFHLERIF.

Catalysis depends on D268, which acts as the Proton donor.

It belongs to the eIF-2B alpha/beta/delta subunits family. MtnA subfamily.

It localises to the cytoplasm. The protein localises to the nucleus. It carries out the reaction 5-(methylsulfanyl)-alpha-D-ribose 1-phosphate = 5-(methylsulfanyl)-D-ribulose 1-phosphate. It participates in amino-acid biosynthesis; L-methionine biosynthesis via salvage pathway; L-methionine from S-methyl-5-thio-alpha-D-ribose 1-phosphate: step 1/6. In terms of biological role, catalyzes the interconversion of methylthioribose-1-phosphate (MTR-1-P) into methylthioribulose-1-phosphate (MTRu-1-P). The chain is Methylthioribose-1-phosphate isomerase from Ajellomyces capsulatus (strain G186AR / H82 / ATCC MYA-2454 / RMSCC 2432) (Darling's disease fungus).